A 102-amino-acid chain; its full sequence is Large ribosomal subunit protein bL21 (102 aa).

Residues Lys77–His88 show a composition bias toward basic residues. Positions Lys77 to Ala102 are disordered. Over residues Thr93–Ala102 the composition is skewed to polar residues.

This sequence belongs to the bacterial ribosomal protein bL21 family. In terms of assembly, part of the 50S ribosomal subunit. Contacts protein L20.

In terms of biological role, this protein binds to 23S rRNA in the presence of protein L20. This Limosilactobacillus reuteri (strain DSM 20016) (Lactobacillus reuteri) protein is Large ribosomal subunit protein bL21.